The primary structure comprises 374 residues: Glutamate 5-kinase (374 aa).

Lys-16 lines the ATP pocket. Substrate-binding residues include Ser-56, Asp-143, and Asn-155. Residue 175–176 (TD) participates in ATP binding. Positions 282–360 (RGRVVLDAGA…SEIEAVLGYV (79 aa)) constitute a PUA domain.

The protein belongs to the glutamate 5-kinase family.

The protein resides in the cytoplasm. It carries out the reaction L-glutamate + ATP = L-glutamyl 5-phosphate + ADP. The protein operates within amino-acid biosynthesis; L-proline biosynthesis; L-glutamate 5-semialdehyde from L-glutamate: step 1/2. Its function is as follows. Catalyzes the transfer of a phosphate group to glutamate to form L-glutamate 5-phosphate. The chain is Glutamate 5-kinase from Ralstonia nicotianae (strain ATCC BAA-1114 / GMI1000) (Ralstonia solanacearum).